An 89-amino-acid chain; its full sequence is MPEAPELDIFQKEVQEMKADQKSLEQRVSTLERTSDRHDQQIISINEKLNKIEENTTWIKRSITGAIITAVSTGIIGGAIAVFYNLLQK.

To B.licheniformis xpaF1 and to B.subtilis XhlA.

This is an uncharacterized protein from Bacillus licheniformis.